The primary structure comprises 433 residues: Enolase (433 aa).

Q163 lines the (2R)-2-phosphoglycerate pocket. E205 acts as the Proton donor in catalysis. 3 residues coordinate Mg(2+): D241, E289, and D316. (2R)-2-phosphoglycerate is bound by residues K341, R370, S371, and K392. The active-site Proton acceptor is K341.

Belongs to the enolase family. Mg(2+) is required as a cofactor.

It localises to the cytoplasm. It is found in the secreted. The protein resides in the cell surface. The catalysed reaction is (2R)-2-phosphoglycerate = phosphoenolpyruvate + H2O. It participates in carbohydrate degradation; glycolysis; pyruvate from D-glyceraldehyde 3-phosphate: step 4/5. Its function is as follows. Catalyzes the reversible conversion of 2-phosphoglycerate (2-PG) into phosphoenolpyruvate (PEP). It is essential for the degradation of carbohydrates via glycolysis. The protein is Enolase of Treponema denticola (strain ATCC 35405 / DSM 14222 / CIP 103919 / JCM 8153 / KCTC 15104).